The sequence spans 211 residues: Dibenzothiophene metabolism operon protein DoxH (211 aa).

It functions in the pathway aromatic compound metabolism; naphthalene degradation. In terms of biological role, may be involved in the conversion of 2-hydroxy-4-(2'-oxo-3,5-cyclohexadienyl)-buta-2,4-dienoate to cis-O-hydroxybenzylidenepyruvate. DoxH and doxJ encode different enzymes that may have interchangeable functions. The protein is Dibenzothiophene metabolism operon protein DoxH (doxH) of Pseudomonas sp. (strain C18).